We begin with the raw amino-acid sequence, 149 residues long: Transcriptional repressor NrdR (149 aa).

The segment at 3 to 34 (CPFCSAVDTKVIDSRLVGDGSQVRRRRQCLVC) is a zinc-finger region. The ATP-cone domain maps to 49 to 139 (PRVVKSNGVR…VYRSFEDVRE (91 aa)).

It belongs to the NrdR family. Requires Zn(2+) as cofactor.

Its function is as follows. Negatively regulates transcription of bacterial ribonucleotide reductase nrd genes and operons by binding to NrdR-boxes. The polypeptide is Transcriptional repressor NrdR (Edwardsiella ictaluri (strain 93-146)).